We begin with the raw amino-acid sequence, 434 residues long: Homogentisate 1,2-dioxygenase (434 aa).

His289 serves as the catalytic Proton acceptor. Fe cation is bound by residues His332 and Glu338. Homogentisate is bound by residues Tyr347 and His368. His368 contributes to the Fe cation binding site.

This sequence belongs to the homogentisate dioxygenase family. Hexamer; dimer of trimers. Fe cation serves as cofactor.

The enzyme catalyses homogentisate + O2 = 4-maleylacetoacetate + H(+). It functions in the pathway amino-acid degradation; L-phenylalanine degradation; acetoacetate and fumarate from L-phenylalanine: step 4/6. In terms of biological role, involved in the catabolism of homogentisate (2,5-dihydroxyphenylacetate or 2,5-OH-PhAc), a central intermediate in the degradation of phenylalanine and tyrosine. Catalyzes the oxidative ring cleavage of the aromatic ring of homogentisate to yield maleylacetoacetate. In Pseudomonas syringae pv. tomato (strain ATCC BAA-871 / DC3000), this protein is Homogentisate 1,2-dioxygenase.